The sequence spans 569 residues: Urease subunit alpha (569 aa).

In terms of domain architecture, Urease spans 132–569; the sequence is GGVDTHIHFI…VPLGQRYFLF (438 aa). The Ni(2+) site is built by H137, H139, and K220. K220 carries the N6-carboxylysine modification. H222 lines the substrate pocket. Residues H249 and H275 each contribute to the Ni(2+) site. Catalysis depends on H323, which acts as the Proton donor. Position 363 (D363) interacts with Ni(2+).

This sequence belongs to the metallo-dependent hydrolases superfamily. Urease alpha subunit family. In terms of assembly, heterotrimer of UreA (gamma), UreB (beta) and UreC (alpha) subunits. Three heterotrimers associate to form the active enzyme. Ni cation is required as a cofactor. Carboxylation allows a single lysine to coordinate two nickel ions.

Its subcellular location is the cytoplasm. It catalyses the reaction urea + 2 H2O + H(+) = hydrogencarbonate + 2 NH4(+). Its pathway is nitrogen metabolism; urea degradation; CO(2) and NH(3) from urea (urease route): step 1/1. The chain is Urease subunit alpha from Bacillus subtilis (strain 168).